A 43-amino-acid chain; its full sequence is Lanthionine-containing peptide SapB (43 aa).

The first 21 residues, 1–21 (MALLDLQAMDTPAEDSFGELR), serve as a signal peptide directing secretion. 2 cross-links (lanthionine (Ser-Cys)) span residues 24-31 (SQVSLLVC) and 34-41 (SSLSVVLC). Ser27 and Ser37 each carry 2,3-didehydroalanine (Ser).

This sequence belongs to the lanthionine-containing morphogen protein family. Maturation involves the enzymatic conversion of Ser into dehydrated AA and the formation of thioether bonds with cysteine. This is followed by membrane translocation and cleavage of the modified precursor.

Functionally, lanthionine-containing peptide devoid of antibiotic properties, involved in the formation of aerial mycelium. Suggested to self-assemble at air-water interfaces, thus providing a film of surfactant through which nascent aerial hyphae can emerge. The aerial hyphae differentiate further into spores. The sequence is that of Lanthionine-containing peptide SapB (ramS) from Streptomyces griseus.